A 360-amino-acid polypeptide reads, in one-letter code: Capsular polysaccharide phosphotransferase LcbA (360 aa).

The protein belongs to the stealth family.

Part of a group II capsule biosynthesis locus. This Aeromonas hydrophila protein is Capsular polysaccharide phosphotransferase LcbA (lcbA).